Reading from the N-terminus, the 624-residue chain is DNA mismatch repair protein MutL (624 aa).

It belongs to the DNA mismatch repair MutL/HexB family.

Functionally, this protein is involved in the repair of mismatches in DNA. It is required for dam-dependent methyl-directed DNA mismatch repair. May act as a 'molecular matchmaker', a protein that promotes the formation of a stable complex between two or more DNA-binding proteins in an ATP-dependent manner without itself being part of a final effector complex. The sequence is that of DNA mismatch repair protein MutL from Xanthomonas campestris pv. campestris (strain B100).